A 1175-amino-acid polypeptide reads, in one-letter code: Pyruvate carboxylase 1 (1175 aa).

The Biotin carboxylation domain maps to 31–481; sequence EFNKVMVANR…DTYFIDEHPE (451 aa). Residues lysine 147, glutamate 231, and histidine 266 each contribute to the ATP site. The ATP-grasp domain maps to 151–348; it reads RQAAIEAGVQ…LVQAQIRIAE (198 aa). The active site involves arginine 323. Residues 559-828 form the Pyruvate carboxyltransferase domain; sequence CMITDTTFRD…DTGLSLDDIS (270 aa). Residues 567-571 and arginine 640 contribute to the substrate site; that span reads RDAHQ. Position 568 (aspartate 568) interacts with a divalent metal cation. A divalent metal cation-binding residues include lysine 737, histidine 767, and histidine 769. Lysine 737 carries the N6-carboxylysine modification. Threonine 904 is a binding site for substrate. A Biotinyl-binding domain is found at 1099-1174; the sequence is RALPGVRGHI…SAGDLVVEVE (76 aa). The residue at position 1140 (lysine 1140) is an N6-biotinyllysine.

Interacts with sir-2.2 and sir-2.3. Biotin serves as cofactor. Zn(2+) is required as a cofactor.

The protein localises to the cytoplasm. The catalysed reaction is hydrogencarbonate + pyruvate + ATP = oxaloacetate + ADP + phosphate + H(+). The protein operates within carbohydrate biosynthesis; gluconeogenesis. Functionally, pyruvate carboxylase catalyzes a 2-step reaction, involving the ATP-dependent carboxylation of the covalently attached biotin in the first step and the transfer of the carboxyl group to pyruvate in the second. In Caenorhabditis elegans, this protein is Pyruvate carboxylase 1.